The chain runs to 247 residues: Putative methyltransferase GWCH70_2453 (247 aa).

Belongs to the methyltransferase superfamily.

Its function is as follows. May be a S-adenosyl-L-methionine (SAM)-dependent methyltransferase. This chain is Putative methyltransferase GWCH70_2453, found in Geobacillus sp. (strain WCH70).